The following is a 265-amino-acid chain: uncharacterized protein (265 aa).

A signal peptide spans 1 to 23 (MNYFRILYCSVLLFFSFFSCTSA). One can recognise a NodB homology domain in the interval 67–248 (KEIYLTFDNG…TLKQQGYTFK (182 aa)).

It belongs to the polysaccharide deacetylase family.

This is an uncharacterized protein from Geobacillus stearothermophilus (Bacillus stearothermophilus).